A 273-amino-acid chain; its full sequence is Protein GMH1 (273 aa).

A disordered region spans residues methionine 1 to tyrosine 33. The residue at position 2 (serine 2) is an N-acetylserine. Over serine 2 to aspartate 89 the chain is Cytoplasmic. The helical transmembrane segment at proline 90–tyrosine 110 threads the bilayer. The Lumenal segment spans residues asparagine 111–valine 134. The helical transmembrane segment at methionine 135–leucine 155 threads the bilayer. Residues leucine 156–tyrosine 175 lie on the Cytoplasmic side of the membrane. The helical transmembrane segment at cysteine 176 to phenylalanine 196 threads the bilayer. The Lumenal segment spans residues leucine 197–leucine 216. A helical transmembrane segment spans residues tyrosine 217–phenylalanine 237. The Cytoplasmic portion of the chain corresponds to leucine 238 to asparagine 242. Residues phenylalanine 243–aspartate 263 form a helical membrane-spanning segment. At leucine 264 to tyrosine 273 the chain is on the lumenal side.

It belongs to the unc-50 family. Interacts with GEA1 and GEA2.

It localises to the golgi apparatus membrane. The protein resides in the endoplasmic reticulum membrane. The chain is Protein GMH1 (GMH1) from Saccharomyces cerevisiae (strain ATCC 204508 / S288c) (Baker's yeast).